The sequence spans 252 residues: MERVLIVNADDFGLSKGQNYGIVEAYRNGVVTSTTALVNGEAIGHAAQLSRELPALGVGMHFVLTLGKPVSEMPGLTRDGLLGKWIWQMAEEDTLPLDEIAHELACQYQRFIDVFGREPTHLDSHHHVHMFPQIFPIVARFAAQRGIALRIDRQTVLNADDLPSDLRSTQGFSSEFYGEEITEACFLRILDASAHRGEASLEVMCHPAFVDNIIRQSAYCYPRLTELEVLTSASLKAAIAERGYRPGSFLDI.

Mg(2+) contacts are provided by H61 and H125.

This sequence belongs to the YdjC deacetylase family. ChbG subfamily. As to quaternary structure, homodimer. The cofactor is Mg(2+).

The protein localises to the cytoplasm. The enzyme catalyses N,N'-diacetylchitobiose + H2O = N-acetyl-beta-D-glucosaminyl-(1-&gt;4)-D-glucosamine + acetate. The catalysed reaction is diacetylchitobiose-6'-phosphate + H2O = N'-monoacetylchitobiose-6'-phosphate + acetate. It functions in the pathway glycan degradation; chitin degradation. In terms of biological role, involved in the degradation of chitin. ChbG is essential for growth on the acetylated chitooligosaccharides chitobiose and chitotriose but is dispensable for growth on cellobiose and chitosan dimer, the deacetylated form of chitobiose. Deacetylation of chitobiose-6-P and chitotriose-6-P is necessary for both the activation of the chb promoter by the regulatory protein ChbR and the hydrolysis of phosphorylated beta-glucosides by the phospho-beta-glucosidase ChbF. Catalyzes the removal of only one acetyl group from chitobiose-6-P to yield monoacetylchitobiose-6-P, the inducer of ChbR and the substrate of ChbF. In Salmonella schwarzengrund (strain CVM19633), this protein is Chitooligosaccharide deacetylase.